Reading from the N-terminus, the 185-residue chain is Ribosome-recycling factor (185 aa).

This sequence belongs to the RRF family.

Its subcellular location is the cytoplasm. Responsible for the release of ribosomes from messenger RNA at the termination of protein biosynthesis. May increase the efficiency of translation by recycling ribosomes from one round of translation to another. In Bacillus licheniformis (strain ATCC 14580 / DSM 13 / JCM 2505 / CCUG 7422 / NBRC 12200 / NCIMB 9375 / NCTC 10341 / NRRL NRS-1264 / Gibson 46), this protein is Ribosome-recycling factor.